A 106-amino-acid polypeptide reads, in one-letter code: Prothymosin alpha-B (106 aa).

Residues 1-39 (MADAKVDSATEISAKDLKEKKLIEEKENGKDATNGKENE) show a composition bias toward basic and acidic residues. A disordered region spans residues 1–106 (MADAKVDSAT…DVDPKKQKVN (106 aa)). Ser8 is subject to Phosphoserine. Thr10 carries the post-translational modification Phosphothreonine. Composition is skewed to acidic residues over residues 40-76 (ENGEPEIDDEDDDEVDEDDEEGEGDEDEDEDDDDEDL) and 85-98 (DDDEDEDEDDEDDV).

This sequence belongs to the pro/parathymosin family. As to expression, uniformly expressed in all embryonic cells at 4 and 8 hpf. At the 20-somite stage (18 hpf), ubiquitously expressed in the developing nervous system, in the tail bud and in the pronephric ducts. Also expressed in some placodes, including the anterior lateral line placode, otic vesicle and olfactory placode. At 27 hpf, strong expression persists in the central nervous system and the olfactory placode. Expressed strongly in the eyes and the pectoral fin buds. In the tail region, expressed in the spinal cord, in the posterior lateral line precursors, and persists in the pronephric ducts. At 48 hpf, expressed in all head territories including the developing brain, eyes, and pharyngeal arches. More caudally, expression persists in the pectoral fin buds, the spinal cord and, for the first time, appears in the intestine. At 72 hpf, expressed only in restricted regions of the brain, in pharyngeal arches region and in the amacrine cells and the horizontal cells of the retina.

The protein localises to the nucleus. The chain is Prothymosin alpha-B from Danio rerio (Zebrafish).